Reading from the N-terminus, the 198-residue chain is Small ribosomal subunit protein eS1 (198 aa).

Belongs to the eukaryotic ribosomal protein eS1 family.

The chain is Small ribosomal subunit protein eS1 from Methanospirillum hungatei JF-1 (strain ATCC 27890 / DSM 864 / NBRC 100397 / JF-1).